The following is a 305-amino-acid chain: Tyrosine recombinase XerD (305 aa).

The Core-binding (CB) domain maps to 9-94 (MQDFGYVEQF…AIRRLFQYLH (86 aa)). The Tyr recombinase domain occupies 115 to 299 (RLPKDISEEQ…ATERLKQIHS (185 aa)). Residues arginine 155, lysine 179, histidine 251, arginine 254, and histidine 277 contribute to the active site. Tyrosine 286 serves as the catalytic O-(3'-phospho-DNA)-tyrosine intermediate.

It belongs to the 'phage' integrase family. XerD subfamily. As to quaternary structure, forms a cyclic heterotetrameric complex composed of two molecules of XerC and two molecules of XerD.

Its subcellular location is the cytoplasm. In terms of biological role, site-specific tyrosine recombinase, which acts by catalyzing the cutting and rejoining of the recombining DNA molecules. The XerC-XerD complex is essential to convert dimers of the bacterial chromosome into monomers to permit their segregation at cell division. It also contributes to the segregational stability of plasmids. The chain is Tyrosine recombinase XerD from Vibrio vulnificus (strain CMCP6).